A 66-amino-acid polypeptide reads, in one-letter code: Large ribosomal subunit protein bL35 (66 aa).

It belongs to the bacterial ribosomal protein bL35 family.

This is Large ribosomal subunit protein bL35 from Treponema pallidum (strain Nichols).